Reading from the N-terminus, the 492-residue chain is Malonyl-CoA decarboxylase, mitochondrial (492 aa).

The transit peptide at 1–38 directs the protein to the mitochondrion; the sequence is MRGLGPSLRARRLLPLRYPPRPPGPRGPRLCSGLTASA. The alpha-helical domain stretch occupies residues 39 to 189; the sequence is MDELLRRAVP…VLKSMLSEWF (151 aa). Lysine 58 is modified (N6-acetyllysine). Lysine 167 is subject to N6-acetyllysine; alternate. Residue lysine 167 is modified to N6-succinyllysine; alternate. A catalytic domain region spans residues 190–492; sequence SSGFLNLERV…VAQFQSNSKL (303 aa). Lysine 210 bears the N6-acetyllysine mark. An N6-succinyllysine modification is found at lysine 221. Residue 298–304 coordinates malonyl-CoA; the sequence is QGVELGT. The residue at position 316 (lysine 316) is an N6-acetyllysine. Serine 328 is a binding site for malonyl-CoA. The active-site Proton acceptor is the serine 328. Residue lysine 385 is modified to N6-acetyllysine; alternate. At lysine 385 the chain carries N6-succinyllysine; alternate. Position 388 is an N6-acetyllysine (lysine 388). Position 422 (histidine 422) interacts with malonyl-CoA. Histidine 422 (proton donor) is an active-site residue. Residues lysine 441 and lysine 471 each carry the N6-acetyllysine modification. The short motif at 490-492 is the Microbody targeting signal element; that stretch reads SKL.

Homotetramer. Dimer of dimers. The two subunits within a dimer display conformational differences suggesting that at any given moment, only one of the two subunits is competent for malonyl-CoA binding and catalytic activity. Under oxidizing conditions, can form disulfide-linked homotetramers (in vitro). Associates with the peroxisomal targeting signal receptor PEX5. In terms of processing, acetylation at Lys-471 activates malonyl-CoA decarboxylase activity. Deacetylation at Lys-471 by SIRT4 represses activity, leading to promote lipogenesis. Interchain disulfide bonds may form in peroxisomes (Potential). Interchain disulfide bonds are not expected to form in the reducing environment of the cytoplasm and mitochondria. Expressed in liver, heart, skeletal muscles and adipose tissues (at protein level). Ubiquitous. Strongly expressed in liver, kidney, heart, skeletal muscle and adipose tissues. Weakly expressed in brain.

It localises to the cytoplasm. The protein resides in the mitochondrion matrix. Its subcellular location is the peroxisome. The protein localises to the peroxisome matrix. The catalysed reaction is malonyl-CoA + H(+) = acetyl-CoA + CO2. Its pathway is metabolic intermediate biosynthesis; acetyl-CoA biosynthesis; acetyl-CoA from malonyl-CoA: step 1/1. With respect to regulation, malonyl-CoA decarboxylase activity does not require any cofactors or divalent metal ions. In terms of biological role, catalyzes the conversion of malonyl-CoA to acetyl-CoA. In the fatty acid biosynthesis MCD selectively removes malonyl-CoA and thus assures that methyl-malonyl-CoA is the only chain elongating substrate for fatty acid synthase and that fatty acids with multiple methyl side chains are produced. In peroxisomes it may be involved in degrading intraperoxisomal malonyl-CoA, which is generated by the peroxisomal beta-oxidation of odd chain-length dicarboxylic fatty acids. Plays a role in the metabolic balance between glucose and lipid oxidation in muscle independent of alterations in insulin signaling. May play a role in controlling the extent of ischemic injury by promoting glucose oxidation. This Rattus norvegicus (Rat) protein is Malonyl-CoA decarboxylase, mitochondrial.